The chain runs to 420 residues: 3-oxoacyl-[acyl-carrier-protein] synthase 2 (420 aa).

The 407-residue stretch at 13-419 folds into the Ketosynthase family 3 (KS3) domain; it reads FPNVVVTGIA…GHNVAIAFGC (407 aa). Active-site for beta-ketoacyl synthase activity residues include Cys173, His314, and His349.

Belongs to the thiolase-like superfamily. Beta-ketoacyl-ACP synthases family.

It is found in the cytoplasm. It catalyses the reaction an ultra-long-chain di-unsaturated fatty acyl-[ACP] + malonyl-[ACP] + H(+) = a 3-oxo-ultra-long-chain di-unsaturated fatty acyl-[ACP] + holo-[ACP] + CO2. It participates in lipid metabolism; mycolic acid biosynthesis. Its function is as follows. Part of the mycobacterial fatty acid elongation system FAS-II, which is involved in mycolic acid biosynthesis. Catalyzes the elongation of long chain acyl-ACP substrates by the addition of two carbons from malonyl-ACP to an acyl acceptor. Involved in extension of the mycolate chains to full lengths and produces longer chain multiunsaturated hydrocarbons averaging 54 carbons in length. The polypeptide is 3-oxoacyl-[acyl-carrier-protein] synthase 2 (kasB) (Mycobacterium leprae (strain TN)).